We begin with the raw amino-acid sequence, 310 residues long: Aspartate carbamoyltransferase catalytic subunit (310 aa).

Arg60 and Thr61 together coordinate carbamoyl phosphate. L-aspartate is bound at residue Lys88. The carbamoyl phosphate site is built by Arg110, His138, and Gln141. L-aspartate contacts are provided by Arg171 and Arg225. Carbamoyl phosphate-binding residues include Gly266 and Pro267.

It belongs to the aspartate/ornithine carbamoyltransferase superfamily. ATCase family. Heterododecamer (2C3:3R2) of six catalytic PyrB chains organized as two trimers (C3), and six regulatory PyrI chains organized as three dimers (R2).

It catalyses the reaction carbamoyl phosphate + L-aspartate = N-carbamoyl-L-aspartate + phosphate + H(+). It functions in the pathway pyrimidine metabolism; UMP biosynthesis via de novo pathway; (S)-dihydroorotate from bicarbonate: step 2/3. Functionally, catalyzes the condensation of carbamoyl phosphate and aspartate to form carbamoyl aspartate and inorganic phosphate, the committed step in the de novo pyrimidine nucleotide biosynthesis pathway. In Christiangramia forsetii (strain DSM 17595 / CGMCC 1.15422 / KT0803) (Gramella forsetii), this protein is Aspartate carbamoyltransferase catalytic subunit.